Reading from the N-terminus, the 89-residue chain is Small ribosomal subunit protein uS17 (89 aa).

This sequence belongs to the universal ribosomal protein uS17 family. In terms of assembly, part of the 30S ribosomal subunit.

Its function is as follows. One of the primary rRNA binding proteins, it binds specifically to the 5'-end of 16S ribosomal RNA. The sequence is that of Small ribosomal subunit protein uS17 from Novosphingobium aromaticivorans (strain ATCC 700278 / DSM 12444 / CCUG 56034 / CIP 105152 / NBRC 16084 / F199).